Consider the following 488-residue polypeptide: Inosine-5'-monophosphate dehydrogenase (488 aa).

CBS domains follow at residues 94-150 and 154-215; these read IVSE…SKTV and MTKK…CKDE. NAD(+)-binding positions include aspartate 249, 249–251, and 299–301; these read DSS and GIG. The K(+) site is built by glycine 301 and glycine 303. Serine 304 provides a ligand contact to IMP. Cysteine 306 is a binding site for K(+). The active-site Thioimidate intermediate is the cysteine 306. Residues 339–341, 362–363, and 386–390 each bind IMP; these read DGG, GS, and YRGMG. Arginine 402 (proton acceptor) is an active-site residue. Glutamate 416 is an IMP binding site. 3 residues coordinate K(+): glutamate 470, serine 471, and histidine 472.

The protein belongs to the IMPDH/GMPR family. As to quaternary structure, homotetramer. It depends on K(+) as a cofactor.

It catalyses the reaction IMP + NAD(+) + H2O = XMP + NADH + H(+). It functions in the pathway purine metabolism; XMP biosynthesis via de novo pathway; XMP from IMP: step 1/1. Its activity is regulated as follows. Mycophenolic acid (MPA) is a non-competitive inhibitor that prevents formation of the closed enzyme conformation by binding to the same site as the amobile flap. In contrast, mizoribine monophosphate (MZP) is a competitive inhibitor that induces the closed conformation. MPA is a potent inhibitor of mammalian IMPDHs but a poor inhibitor of the bacterial enzymes. MZP is a more potent inhibitor of bacterial IMPDH. Its function is as follows. Catalyzes the conversion of inosine 5'-phosphate (IMP) to xanthosine 5'-phosphate (XMP), the first committed and rate-limiting step in the de novo synthesis of guanine nucleotides, and therefore plays an important role in the regulation of cell growth. This chain is Inosine-5'-monophosphate dehydrogenase, found in Haemophilus influenzae (strain ATCC 51907 / DSM 11121 / KW20 / Rd).